Here is a 591-residue protein sequence, read N- to C-terminus: Alternative cytochrome c oxidase subunit 1 (591 aa).

The helical transmembrane segment at valine 40–serine 60 threads the bilayer. Histidine 88 provides a ligand contact to heme b. Transmembrane regions (helical) follow at residues methionine 90 to isoleucine 110, methionine 126 to proline 146, glycine 172 to leucine 192, valine 215 to glycine 235, leucine 274 to valine 294, valine 313 to valine 333, tyrosine 337 to isoleucine 357, methionine 377 to leucine 397, valine 412 to isoleucine 432, phenylalanine 453 to leucine 473, and phenylalanine 498 to valine 518. Residues histidine 280, tyrosine 284, histidine 329, and histidine 330 each coordinate Cu cation. Positions histidine 280 to tyrosine 284 form a cross-link, 1'-histidyl-3'-tyrosine (His-Tyr). Residues histidine 415 and histidine 417 each coordinate heme b.

It belongs to the heme-copper respiratory oxidase family. This alternate cytochrome c oxidase consists of a subunit I and two cytochromes c. Equivalents to subunit 2 and 3 are not present in this complex.

The protein localises to the cell membrane. The enzyme catalyses 4 Fe(II)-[cytochrome c] + O2 + 8 H(+)(in) = 4 Fe(III)-[cytochrome c] + 2 H2O + 4 H(+)(out). Its function is as follows. Cytochrome c oxidase is the component of the respiratory chain that catalyzes the reduction of oxygen to water. Subunits 1-3 form the functional core of the enzyme complex. Co I is the catalytic subunit of the enzyme. Electrons originating in cytochrome c are transferred via the copper A center of subunit 2 and a low-spin heme of subunit 1 to the bimetallic center formed by a high-spin heme and copper B. This Bradyrhizobium diazoefficiens (strain JCM 10833 / BCRC 13528 / IAM 13628 / NBRC 14792 / USDA 110) protein is Alternative cytochrome c oxidase subunit 1 (coxN).